The following is a 281-amino-acid chain: NADPH-dependent 7-cyano-7-deazaguanine reductase (281 aa).

Residue Val-88–Ser-90 participates in substrate binding. Ser-90–Lys-91 provides a ligand contact to NADPH. The active-site Thioimide intermediate is Cys-189. Asp-196 acts as the Proton donor in catalysis. Residue His-228 to Glu-229 participates in substrate binding. Arg-257–Gly-258 is an NADPH binding site.

It belongs to the GTP cyclohydrolase I family. QueF type 2 subfamily. Homodimer.

It localises to the cytoplasm. It carries out the reaction 7-aminomethyl-7-carbaguanine + 2 NADP(+) = 7-cyano-7-deazaguanine + 2 NADPH + 3 H(+). It participates in tRNA modification; tRNA-queuosine biosynthesis. Functionally, catalyzes the NADPH-dependent reduction of 7-cyano-7-deazaguanine (preQ0) to 7-aminomethyl-7-deazaguanine (preQ1). The polypeptide is NADPH-dependent 7-cyano-7-deazaguanine reductase (Klebsiella pneumoniae (strain 342)).